Consider the following 1333-residue polypeptide: MECVSVEGLDSSFLEGQTFGDILCLPWTIIKGIRERKNRNKMKIILKNVSLLAKSGEMVLVLGRPGAGCTSFLKSAAGETSQFAGGVTTGHISYDGIPQKEMMQHYKPDVIYNGEQDVHFPHLTVKQTLDFAISCKMPAKRVNNVTKEEYITANREFYAKIFGLTHTFDTKVGNDFISGVSGGERKRVSIAEALAAKGSIYCWDNATRGLDSSTALEFARAIRTMTNLLGTTALVTVYQASENIYETFDKVTVLYAGRQIFCGKTTEAKDYFENMGYLCPPRQSTAEYLTAITDPNGLHEIKPGFEYQVPHTADEFEKYWLDSPEYARLKGEIQKYKHEVNTEWTKKTYNESMAQEKSKGTRKKSYYTVSYWEQIRLCTIRGFLRIYGDKSYTVINTCAAIAQAFITGSLFYQAPSSTLGAFSRSGVLFFSLLYYSLMGLANISFEHRPILQKHKVYSLYHPSAEALASTISSFPFRMIGLTFFIIILYFLAGLHRSAGAFFTMYLLLTMCSEAITSLFQMVSSLCDTLSQANSIAGVVMLSIAMYSTYMIQLPSMHPWFKWISYILPIRYAFESMLNAEFHGRHMDCGGTLVPSGPGFENILPENQVCAFVGSRPGQSWVLGDDYLRAQYQYEYKNTWRNFGIMWCFLIGYIVLRAVFTEYKSPVKSGGDALVVKKGTKNAIQRSWSSKNDEENLNASIATQDMKEIASSNDDSTSADFEGLESTGVFIWKNVSFTIPHSSGQRKLLDSVSGYCVPGTLTALIGESGAGKTTLLNTLAQRNVGTITGDMLVDGLPMDASFKRRTGYVQQQDLHVAELTVKESLQFSARMRRPQSIPDAEKMEYVEKIISILEMQEFSEALVGEIGYGLNVEQRKKLSIGVELVGKPDLLLFLDEPTSGLDSQSAWAVVKMLKRLALAGQSILCTIHQPSATLFEQFDRLLLLGKGGQTIYFGEIGKNSSSVIKYFEKNGARKCQQNENPAEYILEAIGAGATASVQQNWPDIWQKSHEYANINEKINDMIKDLSSTTLHKTATRASKYATSYSYQFHHVLKRSSLTFWRNLNYIMAKMMLLMISGLFIGFTFFHVGVNAIGLQNSLFACFMAIVISAPATNQIQERATVAKELYEVRESKSNMFHWSLLLITHYLNELPYHLLFSTIFFVSSYFPLGVFTEASRSSVFYLNYAILFQLYYIGLALMILYMSPNLQSANVIVGFILSFLLSFCGAVQPASLMPGFWTFMWKLSPYTYFLQNLVGLLMHDKPVRCSKKELSLFNPPVGQTCGEFTKPFFEFGTGYIANPDATADCAYCQYKVGDEYLARINASFSYLWRNFGFI.

A helical transmembrane segment spans residues 13-33; that stretch reads FLEGQTFGDILCLPWTIIKGI. The ABC transporter 1 domain occupies 30 to 281; it reads IKGIRERKNR…FENMGYLCPP (252 aa). N-linked (GlcNAc...) asparagine glycosylation is found at asparagine 48, asparagine 144, asparagine 205, and asparagine 350. The next 6 helical transmembrane spans lie at 392–412, 425–445, 474–494, 499–519, 534–554, and 642–662; these read YTVI…SLFY, SGVL…NISF, FPFR…LAGL, GAFF…TSLF, SIAG…IQLP, and FGIM…FTEY. N-linked (GlcNAc...) asparagine glycans are attached at residues asparagine 697 and asparagine 733. In terms of domain architecture, ABC transporter 2 spans 729–971; it reads FIWKNVSFTI…VIKYFEKNGA (243 aa). Position 765–772 (765–772) interacts with ATP; it reads GESGAGKT. The N-linked (GlcNAc...) asparagine glycan is linked to asparagine 958. Transmembrane regions (helical) follow at residues 1071 to 1091, 1092 to 1112, 1150 to 1170, 1178 to 1198, 1210 to 1230, and 1235 to 1255; these read LLMI…VNAI, GLQN…PATN, PYHL…LGVF, VFYL…ALMI, VIVG…QPAS, and FWTF…LVGL. The N-linked (GlcNAc...) asparagine glycan is linked to asparagine 1320.

This sequence belongs to the ABC transporter superfamily. ABCG family. PDR (TC 3.A.1.205) subfamily.

The protein resides in the membrane. This chain is ABC transporter ATP-binding protein/permease PDR18 (PDR18), found in Saccharomyces cerevisiae (strain ATCC 204508 / S288c) (Baker's yeast).